The chain runs to 109 residues: Irditoxin subunit A (109 aa).

A signal peptide spans 1-19 (MKTLLLAVAVVAFVCLGSA). The propeptide occupies 20 to 34 (DQLGLGRQQIDWGQG). Position 35 is a pyrrolidone carboxylic acid (Q35). 5 disulfide bridges follow: C44–C66, C47–C55, C61–C85, C89–C100, and C101–C106.

This sequence belongs to the three-finger toxin family. Ancestral subfamily. Boigatoxin sub-subfamily. Heterodimer of A and B chains; disulfide-linked. As to expression, expressed by the venom gland.

The protein localises to the secreted. This bird and reptile-specific postsynaptic neurotoxin inhibits the chick muscle alpha-1-beta-1-gamma-delta (CHRNA1-CHRNB1-CHRNG-CHNRD) nicotinic acetylcholine receptor (nAChR) 100-fold more compared with the mouse receptor. In vivo, produces rapid flaccid paralysis, dyspnea and increased respiratory rate in geckos. At sublethal doses geckos were immobilized for up to three days and then recovered. Chicks injected with lethal doses showed rapid onset of inactivity, dyspnea and neck droop, and no extended paralysis with survival was seen. The polypeptide is Irditoxin subunit A (Boiga irregularis (Brown tree snake)).